We begin with the raw amino-acid sequence, 854 residues long: Envelope glycoprotein gp150 (854 aa).

Over 1-783 (MAEGFAANRQ…WIGNIPQYLK (783 aa)) the chain is Extracellular. N-linked (GlcNAc...) asparagine; by host glycans are attached at residues Asn218, Asn256, Asn267, Asn272, Asn296, Asn328, Asn334, Asn340, Asn416, Asn420, Asn479, Asn497, Asn529, Asn546, and Asn549. A fusion peptide region spans residues 614 to 634 (VMLALATVLSMAGAGTGATAI). Residues 641 to 691 (QQVLATHQEAIEKVTEALKINNLRLVTLEHQVLVIGLKVEAMEKFLYTAFA) adopt a coiled-coil conformation. Residues 660–678 (INNLRLVTLEHQVLVIGLK) are immunosuppression. 4 N-linked (GlcNAc...) asparagine; by host glycosylation sites follow: Asn715, Asn719, Asn727, and Asn735. Residues 734–770 (YNQTKDLQQRFYEIIMDIEQNNVQGKKGLQQLQEWED) adopt a coiled-coil conformation. Residues 784–804 (GLLGGILGIGLGMLLLILCLP) traverse the membrane as a helical segment. Over 805 to 854 (TLVDCIRNCIHKILGYTVIAMPEVEEEEIQPQMELRRNGRQCGMSEKEEE) the chain is Cytoplasmic.

The mature envelope protein (Env) consists of a trimer of SU-TM heterodimers attached by noncovalent interactions or by a labile interchain disulfide bond. In terms of processing, specific enzymatic cleavages in vivo yield mature proteins. Envelope glycoproteins are synthesized as an inactive precursor that is N-glycosylated and processed likely by host cell furin or by a furin-like protease in the Golgi to yield the mature SU and TM proteins. The cleavage site between SU and TM requires the minimal sequence [KR]-X-[KR]-R.

It localises to the virion membrane. It is found in the host cell membrane. The surface protein (SU) attaches the virus to the host cell by binding to its receptor. This interaction triggers the refolding of the transmembrane protein (TM) and is thought to activate its fusogenic potential by unmasking its fusion peptide. Fusion occurs at the host cell plasma membrane. In terms of biological role, the transmembrane protein (TM) acts as a class I viral fusion protein. Under the current model, the protein has at least 3 conformational states: pre-fusion native state, pre-hairpin intermediate state, and post-fusion hairpin state. During viral and target cell membrane fusion, the coiled coil regions (heptad repeats) assume a trimer-of-hairpins structure, positioning the fusion peptide in close proximity to the C-terminal region of the ectodomain. The formation of this structure appears to drive apposition and subsequent fusion of viral and target cell membranes. Membranes fusion leads to delivery of the nucleocapsid into the cytoplasm. The sequence is that of Envelope glycoprotein gp150 (env) from Feline immunodeficiency virus (isolate Wo) (FIV).